A 504-amino-acid chain; its full sequence is CDK5 regulatory subunit-associated protein 3 (504 aa).

3 consecutive short sequence motifs (shuffled ATG8-binding motif) follow at residues 266–269 (IDWG), 290–293 (IDWG), and 308–311 (IDWG). Positions 268–504 (WGDFGLEAVS…RPVNLMGTSV (237 aa)) are required for interaction with UFL1 and mediates interaction with CHEK1. Positions 353-368 (DELMELEIFLSQRAVE) are RPL10a-binding domain (RBD). Lys-448 is covalently cross-linked (Glycyl lysine isopeptide (Lys-Gly) (interchain with G-Cter in SUMO2)).

The protein belongs to the CDK5RAP3 family. As to quaternary structure, substrate adapter component of the UFM1 ribosome E3 ligase (UREL) complex, composed of UFL1, DDRGK1 and CDK5RAP3. Interaction with UFL1 anchors CDK5RAP3 in the cytoplasm, preventing its translocation to the nucleus which allows expression of the CCND1 cyclin and progression of cells through the G1/S transition. Interacts with ATG8 family proteins MAP1LC3A, MAP1LC3B, GABARAP, GABARAPL1 and GABARAPL2. Interacts with CDK5R1; competes with CDK5RAP1 and CDK5RAP2. Interacts with RELA. Interacts with CHEK1; may negatively regulate CHEK1 and thereby stimulate entry into mitosis. Interacts with CDKN2A/ARF and MDM2; forms a ternary complex involved in regulation of p53/TP53. Interacts with MAPK14. Interacts with CCNB1. Interacts with TUBG1; may regulate CDK5RAP3 in mitotic G2/M transition checkpoint. Post-translationally, may be phosphorylated by CDK5. In terms of processing, ubiquitinated. Probably triggers proteasomal degradation and is negatively regulated by UFL1. May be ufmylated. Post-translationally, cleaved by caspases early during apoptosis, the resulting peptides may play a role in rupture of the nuclear envelope. As to expression, expressed in vascular endothelium. Up-regulated in failing heart. Highly expressed in the ventricular section in subacute and chronic ischemic heart failure.

The protein resides in the endoplasmic reticulum membrane. It localises to the cytoplasm. Its subcellular location is the nucleus. The protein localises to the cytoskeleton. It is found in the microtubule organizing center. The protein resides in the centrosome. Its function is as follows. Substrate adapter of E3 ligase complexes mediating ufmylation, the covalent attachment of the ubiquitin-like modifier UFM1 to substrate proteins, and which is involved in various processes, such as ribosome recycling and reticulophagy (also called ER-phagy). As part of the UREL complex, plays a key role in ribosome recycling by promoting mono-ufmylation of RPL26/uL24 subunit of the 60S ribosome. Ufmylation of RPL26/uL24 occurs on free 60S ribosomes following ribosome dissociation: it weakens the junction between post-termination 60S subunits and SEC61 translocons, promoting release and recycling of the large ribosomal subunit from the endoplasmic reticulum membrane. Ufmylation of RPL26/uL24 and subsequent 60S ribosome recycling either take place after normal termination of translation or after ribosome stalling during cotranslational translocation at the endoplasmic reticulum. Within the UREL complex, CDK5RAP3 acts as a substrate adapter that constrains UFL1 ligase activity to mono-ufmylate RPL26/uL24 at 'Lys-134'. The UREL complex is also involved in reticulophagy in response to endoplasmic reticulum stress by promoting ufmylation of proteins such as CYB5R3, thereby promoting lysosomal degradation of ufmylated proteins. Also acts as a regulator of transcription: negatively regulates NF-kappa-B-mediated gene transcription through the control of RELA phosphorylation. Also regulates mitotic G2/M transition checkpoint and mitotic G2 DNA damage checkpoint. Through its interaction with CDKN2A/ARF and MDM2 may induce MDM2-dependent p53/TP53 ubiquitination, stabilization and activation in the nucleus, thereby promoting G1 cell cycle arrest and inhibition of cell proliferation. May also play a role in the rupture of the nuclear envelope during apoptosis. May regulate MAPK14 activity by regulating its dephosphorylation by PPM1D/WIP1. Required for liver development. The polypeptide is CDK5 regulatory subunit-associated protein 3 (Rattus norvegicus (Rat)).